The following is a 161-amino-acid chain: Transcription elongation factor GreA (161 aa).

The protein belongs to the GreA/GreB family.

In terms of biological role, necessary for efficient RNA polymerase transcription elongation past template-encoded arresting sites. The arresting sites in DNA have the property of trapping a certain fraction of elongating RNA polymerases that pass through, resulting in locked ternary complexes. Cleavage of the nascent transcript by cleavage factors such as GreA or GreB allows the resumption of elongation from the new 3'terminus. GreA releases sequences of 2 to 3 nucleotides. This Desulfotalea psychrophila (strain LSv54 / DSM 12343) protein is Transcription elongation factor GreA.